The sequence spans 351 residues: Homocitrate synthase (351 aa).

Residues 23–272 (IKFCDTTLRD…KLPVDLDTTS (250 aa)) enclose the Pyruvate carboxyltransferase domain.

It belongs to the alpha-IPM synthase/homocitrate synthase family.

The enzyme catalyses acetyl-CoA + 2-oxoglutarate + H2O = (2R)-homocitrate + CoA + H(+). Its function is as follows. This protein is a Fe-Mo-cofactor biosynthetic component. The chain is Homocitrate synthase (nifV) from Frankia alni.